A 142-amino-acid polypeptide reads, in one-letter code: MFACAKLACTPSLIRAGSRVAYRPISASVLSRPEASRTGEGSAVFNGAQNGVSQLIQREFQTSAISRDIDTAAKFIGAGAATVGVAGSGAGIGTVFGSLIIGYARNPSLKQQLFSYAILGFALSEAMGLFCLMVAFLILFAM.

The N-terminal 67 residues, 1–67 (MFACAKLACT…REFQTSAISR (67 aa)), are a transit peptide targeting the mitochondrion. The chain crosses the membrane as a helical span at residues 83 to 103 (VGVAGSGAGIGTVFGSLIIGY). Lysine 110 carries the post-translational modification N6,N6,N6-trimethyllysine. Residues 118-138 (ILGFALSEAMGLFCLMVAFLI) form a helical membrane-spanning segment.

Belongs to the ATPase C chain family. F-type ATPases have 2 components, CF(1) - the catalytic core - and CF(0) - the membrane proton channel. CF(1) has five subunits: alpha(3), beta(3), gamma(1), delta(1), epsilon(1). CF(0) has three main subunits: a, b and c. Interacts with TMEM70 and TMEM242. Trimethylated by ATPSCKMT at Lys-110. Methylation is required for proper incorporation of the C subunit into the ATP synthase complex and mitochondrial respiration.

Its subcellular location is the mitochondrion membrane. In terms of biological role, mitochondrial membrane ATP synthase (F(1)F(0) ATP synthase or Complex V) produces ATP from ADP in the presence of a proton gradient across the membrane which is generated by electron transport complexes of the respiratory chain. F-type ATPases consist of two structural domains, F(1) - containing the extramembraneous catalytic core and F(0) - containing the membrane proton channel, linked together by a central stalk and a peripheral stalk. During catalysis, ATP synthesis in the catalytic domain of F(1) is coupled via a rotary mechanism of the central stalk subunits to proton translocation. Part of the complex F(0) domain. A homomeric c-ring of probably 10 subunits is part of the complex rotary element. This Pongo abelii (Sumatran orangutan) protein is ATP synthase F(0) complex subunit C3, mitochondrial.